A 222-amino-acid polypeptide reads, in one-letter code: Transmembrane reductase CYB561D2 (222 aa).

The Cytoplasmic segment spans residues 2 to 17 (ALSVETESHIYRALRT). The region spanning 14 to 217 (ALRTVSGAAA…NQVSNAYLYR (204 aa)) is the Cytochrome b561 domain. Residues 18-38 (VSGAAAHLVALGFTIFVAVLA) traverse the membrane as a helical segment. The Lumenal segment spans residues 39-46 (RPGSSLFS). Residues 47-67 (WHPVLMSLAFSFLMTEALLVF) traverse the membrane as a helical segment. A heme b-binding site is contributed by H48. Residues 68-85 (SPESSLLRSLSRKGRARC) are Cytoplasmic-facing. Residues H86 and H120 each coordinate heme b. Residues 86-106 (HWVLQLLALLCALLGLGLVIL) traverse the membrane as a helical segment. Residues 107–122 (HKEQLGKAHLATWHGR) lie on the Lumenal side of the membrane. A helical membrane pass occupies residues 123 to 143 (AGLLAVLWAGLQCSGGVGLLY). Residues 144–162 (PKLLPRWPLAKLKLYHATS) lie on the Cytoplasmic side of the membrane. Residue H159 coordinates heme b. The helical transmembrane segment at 163–183 (GLVGYLLGGASLLLGMCSLWF) threads the bilayer. The Lumenal portion of the chain corresponds to 184 to 186 (TAT). Residues 187–207 (VTGGVWYLAVLCPVITSLVIM) traverse the membrane as a helical segment. Topologically, residues 208–222 (NQVSNAYLYRKRIQP) are cytoplasmic.

The cofactor is heme b.

It is found in the endoplasmic reticulum membrane. The protein resides in the cytoplasmic vesicle membrane. The catalysed reaction is monodehydro-L-ascorbate radical(out) + L-ascorbate(in) = monodehydro-L-ascorbate radical(in) + L-ascorbate(out). It carries out the reaction Fe(3+)(out) + L-ascorbate(in) = monodehydro-L-ascorbate radical(in) + Fe(2+)(out) + H(+). Functionally, transmembrane reductase that may use ascorbate as an electron donor in the cytoplasm and transfer electrons across endoplasmic reticulum membranes to reduce monodehydro-L-ascorbate radical and iron cations Fe(3+) in the lumen of that compartment. This is Transmembrane reductase CYB561D2 from Bos taurus (Bovine).